The chain runs to 121 residues: Small ribosomal subunit protein uS13 (121 aa).

Positions 95 to 121 (GLPVRGQKTKTNARTRKGKRKTVGAKS) are disordered.

Belongs to the universal ribosomal protein uS13 family. Part of the 30S ribosomal subunit. Forms a loose heterodimer with protein S19. Forms two bridges to the 50S subunit in the 70S ribosome.

Located at the top of the head of the 30S subunit, it contacts several helices of the 16S rRNA. In the 70S ribosome it contacts the 23S rRNA (bridge B1a) and protein L5 of the 50S subunit (bridge B1b), connecting the 2 subunits; these bridges are implicated in subunit movement. Contacts the tRNAs in the A and P-sites. The sequence is that of Small ribosomal subunit protein uS13 from Campylobacter jejuni subsp. jejuni serotype O:23/36 (strain 81-176).